Here is a 151-residue protein sequence, read N- to C-terminus: Globin CTT-VIII (151 aa).

Positions Pro4–Glu148 constitute a Globin domain. Heme b-binding residues include His62 and His97.

The protein belongs to the globin family. As to quaternary structure, homodimer.

This chain is Globin CTT-VIII (CTT-8), found in Chironomus thummi thummi (Midge).